The sequence spans 396 residues: Putative cytochrome P450 YjiB (396 aa).

C349 serves as a coordination point for heme.

Belongs to the cytochrome P450 family. Heme serves as cofactor.

The polypeptide is Putative cytochrome P450 YjiB (yjiB) (Bacillus subtilis (strain 168)).